Consider the following 318-residue polypeptide: L-lactate dehydrogenase (318 aa).

NAD(+) contacts are provided by residues Val-18, Asp-39, Lys-44, Tyr-69, and 83 to 84 (GA). The substrate site is built by Gln-86 and Arg-92. NAD(+) contacts are provided by residues Ser-105, 122–124 (VSN), and Ser-147. 124-127 (NPVD) lines the substrate pocket. 152 to 155 (DTSR) contributes to the substrate binding site. The active-site Proton acceptor is His-179. Tyr-225 is modified (phosphotyrosine). Thr-234 serves as a coordination point for substrate.

The protein belongs to the LDH/MDH superfamily. LDH family. As to quaternary structure, homotetramer.

Its subcellular location is the cytoplasm. The enzyme catalyses (S)-lactate + NAD(+) = pyruvate + NADH + H(+). The protein operates within fermentation; pyruvate fermentation to lactate; (S)-lactate from pyruvate: step 1/1. Functionally, catalyzes the conversion of lactate to pyruvate. The protein is L-lactate dehydrogenase of Clostridium botulinum (strain ATCC 19397 / Type A).